We begin with the raw amino-acid sequence, 186 residues long: Elongation factor P (186 aa).

This sequence belongs to the elongation factor P family.

The protein localises to the cytoplasm. It participates in protein biosynthesis; polypeptide chain elongation. Functionally, involved in peptide bond synthesis. Stimulates efficient translation and peptide-bond synthesis on native or reconstituted 70S ribosomes in vitro. Probably functions indirectly by altering the affinity of the ribosome for aminoacyl-tRNA, thus increasing their reactivity as acceptors for peptidyl transferase. This chain is Elongation factor P, found in Mycoplasmopsis synoviae (strain 53) (Mycoplasma synoviae).